We begin with the raw amino-acid sequence, 328 residues long: Lipoyl synthase (328 aa).

[4Fe-4S] cluster is bound by residues Cys-56, Cys-61, Cys-67, Cys-82, Cys-86, Cys-89, and Ser-293. Residues 68-282 (WEDREATFLI…ERVGAELGFS (215 aa)) form the Radical SAM core domain.

Belongs to the radical SAM superfamily. Lipoyl synthase family. Requires [4Fe-4S] cluster as cofactor.

The protein localises to the cytoplasm. The catalysed reaction is [[Fe-S] cluster scaffold protein carrying a second [4Fe-4S](2+) cluster] + N(6)-octanoyl-L-lysyl-[protein] + 2 oxidized [2Fe-2S]-[ferredoxin] + 2 S-adenosyl-L-methionine + 4 H(+) = [[Fe-S] cluster scaffold protein] + N(6)-[(R)-dihydrolipoyl]-L-lysyl-[protein] + 4 Fe(3+) + 2 hydrogen sulfide + 2 5'-deoxyadenosine + 2 L-methionine + 2 reduced [2Fe-2S]-[ferredoxin]. It functions in the pathway protein modification; protein lipoylation via endogenous pathway; protein N(6)-(lipoyl)lysine from octanoyl-[acyl-carrier-protein]: step 2/2. Catalyzes the radical-mediated insertion of two sulfur atoms into the C-6 and C-8 positions of the octanoyl moiety bound to the lipoyl domains of lipoate-dependent enzymes, thereby converting the octanoylated domains into lipoylated derivatives. This Frankia alni (strain DSM 45986 / CECT 9034 / ACN14a) protein is Lipoyl synthase.